The chain runs to 451 residues: Exodeoxyribonuclease 7 large subunit (451 aa).

The protein belongs to the XseA family. As to quaternary structure, heterooligomer composed of large and small subunits.

It localises to the cytoplasm. It carries out the reaction Exonucleolytic cleavage in either 5'- to 3'- or 3'- to 5'-direction to yield nucleoside 5'-phosphates.. Functionally, bidirectionally degrades single-stranded DNA into large acid-insoluble oligonucleotides, which are then degraded further into small acid-soluble oligonucleotides. The protein is Exodeoxyribonuclease 7 large subunit of Bacillus cytotoxicus (strain DSM 22905 / CIP 110041 / 391-98 / NVH 391-98).